Consider the following 397-residue polypeptide: Ubiquitin-like modifier-activating enzyme 5 (397 aa).

ATP-binding residues include G76, D97, K120, N143, and N177. Zn(2+)-binding residues include C219 and C222. C243 functions as the Glycyl thioester intermediate in the catalytic mechanism. Zn(2+) is bound by residues C296 and C301. Residues 362–384 (LAYEPPASTKHSETTSTTAVSDD) are disordered. Residues 375-384 (TTSTTAVSDD) show a composition bias toward low complexity.

This sequence belongs to the ubiquitin-activating E1 family. UBA5 subfamily.

Functionally, E1-like enzyme which activates UFM1. The protein is Ubiquitin-like modifier-activating enzyme 5 of Aedes aegypti (Yellowfever mosquito).